The following is a 753-amino-acid chain: Lysyl oxidase homolog 3 (753 aa).

A signal peptide spans 1 to 25 (MRPVSVWQWSPWGLLLCLLCSSCLG). 2 consecutive SRCR domains span residues 44–145 (FRLA…VICK) and 169–282 (VRIR…VSCV). 6 disulfide bridges follow: cysteine 70-cysteine 134, cysteine 83-cysteine 144, cysteine 114-cysteine 124, cysteine 201-cysteine 271, cysteine 214-cysteine 281, and cysteine 248-cysteine 258. The N-linked (GlcNAc...) asparagine glycan is linked to asparagine 111. The N-linked (GlcNAc...) asparagine glycan is linked to asparagine 266. A compositionally biased stretch (low complexity) spans 290–302 (SSGQKKQQQSKPQ). A disordered region spans residues 290–315 (SSGQKKQQQSKPQGEARVRLKGGAHP). SRCR domains are found at residues 307–407 (VRLK…VRCN) and 417–525 (IRLS…VICS). 11 disulfide bridges follow: cysteine 332/cysteine 396, cysteine 345/cysteine 406, cysteine 376/cysteine 386, cysteine 446/cysteine 511, cysteine 459/cysteine 524, cysteine 492/cysteine 502, cysteine 554/cysteine 560, cysteine 606/cysteine 654, cysteine 638/cysteine 644, cysteine 666/cysteine 676, and cysteine 713/cysteine 727. Asparagine 390 and asparagine 481 each carry an N-linked (GlcNAc...) asparagine glycan. Positions 529 to 732 (SDLLLHSALV…WVHNCHIGDA (204 aa)) are lysyl-oxidase like. Positions 607, 609, and 611 each coordinate Cu cation. An N-linked (GlcNAc...) asparagine glycan is attached at asparagine 625. A cross-link (lysine tyrosylquinone (Lys-Tyr)) is located at residues 634–670 (KASFCLEDTECQEDVSKRYECANFGEQGITVGCWDLY). Tyrosine 670 carries the 2',4',5'-topaquinone modification.

The protein belongs to the lysyl oxidase family. In terms of assembly, interacts with STAT3. Requires Cu cation as cofactor. Lysine tyrosylquinone residue serves as cofactor. Post-translationally, the lysine tyrosylquinone cross-link (LTQ) is generated by condensation of the epsilon-amino group of a lysine with a topaquinone produced by oxidation of tyrosine. Isoform 1: Predominantly detected in the heart, placenta, lung, and small intestine. Isoform 2: Highly detected in the kidney, pancreas, spleen, and thymus, and is absent in lung. In eye, present in all layers of corneas as well as in the limbus and conjunctiva (at protein level).

It is found in the secreted. It localises to the extracellular space. The protein localises to the cytoplasm. The protein resides in the nucleus. It carries out the reaction L-lysyl-[protein] + O2 + H2O = (S)-2-amino-6-oxohexanoyl-[protein] + H2O2 + NH4(+). The enzyme catalyses N(6)-acetyl-L-lysyl-[protein] + O2 + H2O = acetamide + (S)-2-amino-6-oxohexanoyl-[protein] + H2O2. Protein-lysine 6-oxidase that mediates the oxidation of peptidyl lysine residues to allysine in target proteins. Catalyzes the post-translational oxidative deamination of peptidyl lysine residues in precursors of elastin and different types of collagens, a prerequisite in the formation of cross-links between collagens and elastin. Required for somite boundary formation by catalyzing oxidation of fibronectin (FN1), enhancing integrin signaling in myofibers and their adhesion to the myotendinous junction (MTJ). Acts as a regulator of inflammatory response by inhibiting differentiation of naive CD4(+) T-cells into T-helper Th17 or regulatory T-cells (Treg): acts by interacting with STAT3 in the nucleus and catalyzing both deacetylation and oxidation of lysine residues on STAT3, leading to disrupt STAT3 dimerization and inhibit STAT3 transcription activity. Oxidation of lysine residues to allysine on STAT3 preferentially takes place on lysine residues that are acetylated. Also able to catalyze deacetylation of lysine residues on STAT3. Functionally, shows protein-lysine 6-oxidase activity toward elastin and different types of collagens, with the highest activity toward collagen type VIII. In terms of biological role, shows protein-lysine 6-oxidase activity toward elastin and different types of collagens, with the highest activity toward collagen type IV. This chain is Lysyl oxidase homolog 3, found in Homo sapiens (Human).